A 243-amino-acid chain; its full sequence is Ribonuclease PH (243 aa).

Residues R91 and 129–131 each bind phosphate; that span reads GTR.

The protein belongs to the RNase PH family. In terms of assembly, homohexameric ring arranged as a trimer of dimers.

The enzyme catalyses tRNA(n+1) + phosphate = tRNA(n) + a ribonucleoside 5'-diphosphate. Phosphorolytic 3'-5' exoribonuclease that plays an important role in tRNA 3'-end maturation. Removes nucleotide residues following the 3'-CCA terminus of tRNAs; can also add nucleotides to the ends of RNA molecules by using nucleoside diphosphates as substrates, but this may not be physiologically important. Probably plays a role in initiation of 16S rRNA degradation (leading to ribosome degradation) during starvation. In Burkholderia thailandensis (strain ATCC 700388 / DSM 13276 / CCUG 48851 / CIP 106301 / E264), this protein is Ribonuclease PH.